A 511-amino-acid polypeptide reads, in one-letter code: Frizzled/smoothened-like sans CRD protein C (511 aa).

Positions 1-25 are cleaved as a signal peptide; that stretch reads MNQINKFIKNLYLIIITIILIIVIS. At 26 to 93 the chain is on the extracellular side; sequence NDNNGLFING…QWESYFEMSL (68 aa). N-linked (GlcNAc...) asparagine glycosylation occurs at N51. Residues 94-114 form a helical membrane-spanning segment; sequence IMGSISMFASLFLIITYSPLI. Residues 115–122 lie on the Cytoplasmic side of the membrane; that stretch reads NKKHTRHT. A helical membrane pass occupies residues 123 to 143; that stretch reads VGILCMSIGIFFVMVSDGRQL. Over 144–172 the chain is Extracellular; it reads WDIESPGEYKKYCPDTGRYARQSDTKCLT. A helical membrane pass occupies residues 173 to 193; it reads TGLFFQFGCVTAIGWWSILAV. Residues 194–209 lie on the Cytoplasmic side of the membrane; the sequence is DLWMTIAKKVQTTKKQ. The helical transmembrane segment at 210 to 230 threads the bilayer; sequence LLYYLIGINTVSLILTFGPVV. Over 231–253 the chain is Extracellular; it reads KNQYGFGNAAIGCWMLDLKYQYG. A helical membrane pass occupies residues 254 to 274; sequence FFWIPVGICLSVGSVFIGLIF. The Cytoplasmic portion of the chain corresponds to 275–295; it reads WEIYKISDAVKKRYLKKHIKP. The helical transmembrane segment at 296 to 316 threads the bilayer; the sequence is LCLIVLMCLEFLYMFIYYSYI. The Extracellular portion of the chain corresponds to 317-357; sequence TANQPTYNKHVAEYIMCLIINAANVPGSYTCQLKTVSPTAQ. A helical membrane pass occupies residues 358–378; the sequence is FLFLIAIRLMGLQGLIFYGLT. At 379–511 the chain is on the cytoplasmic side; that stretch reads AATKKVWANS…RVNSPDNLQP (133 aa). Residues 430 to 511 are disordered; the sequence is NGYTTGGSDN…RVNSPDNLQP (82 aa). Residues 433-443 are compositionally biased toward gly residues; that stretch reads TTGGSDNGVGS. The span at 451 to 460 shows a compositional bias: polar residues; it reads KSSSNGGAQD. Low complexity predominate over residues 461–485; that stretch reads NNNNNNNNNNNNNNNNNNNNNNNNN. Residues 486–511 show a composition bias toward polar residues; that stretch reads SSSLEISGVESNNSTPRVNSPDNLQP.

The protein belongs to the G-protein coupled receptor Fz/Smo family.

The protein localises to the membrane. The polypeptide is Frizzled/smoothened-like sans CRD protein C (fscC) (Dictyostelium discoideum (Social amoeba)).